The chain runs to 100 residues: Aspartyl/glutamyl-tRNA(Asn/Gln) amidotransferase subunit C (100 aa).

This sequence belongs to the GatC family. As to quaternary structure, heterotrimer of A, B and C subunits.

The enzyme catalyses L-glutamyl-tRNA(Gln) + L-glutamine + ATP + H2O = L-glutaminyl-tRNA(Gln) + L-glutamate + ADP + phosphate + H(+). The catalysed reaction is L-aspartyl-tRNA(Asn) + L-glutamine + ATP + H2O = L-asparaginyl-tRNA(Asn) + L-glutamate + ADP + phosphate + 2 H(+). Allows the formation of correctly charged Asn-tRNA(Asn) or Gln-tRNA(Gln) through the transamidation of misacylated Asp-tRNA(Asn) or Glu-tRNA(Gln) in organisms which lack either or both of asparaginyl-tRNA or glutaminyl-tRNA synthetases. The reaction takes place in the presence of glutamine and ATP through an activated phospho-Asp-tRNA(Asn) or phospho-Glu-tRNA(Gln). This chain is Aspartyl/glutamyl-tRNA(Asn/Gln) amidotransferase subunit C, found in Rickettsia africae (strain ESF-5).